The following is a 290-amino-acid chain: PIH1 domain-containing protein 1 (290 aa).

A compositionally biased stretch (polar residues) spans 34–50 (ELQQAQTSRPESTQIQP). The interval 34–53 (ELQQAQTSRPESTQIQPQPG) is disordered. The residue at position 173 (Ser-173) is a Phosphoserine.

This sequence belongs to the PIH1 family. In terms of assembly, component of the R2TP complex composed at least of RUVBL1, RUVBL2, RPAP3 and PIHD1. Component of the PAQosome complex which is responsible for the biogenesis of several protein complexes and which consists of R2TP complex members RUVBL1, RUVBL2, RPAP3 and PIH1D1, URI complex members PFDN2, PFDN6, PDRG1, UXT and URI1 as well as ASDURF, POLR2E and DNAAF10/WDR92. Interacts with phosphorylated TELO2 and mediates interaction of TELO2 with the R2TP complex. Interacts with phosphorylated ECD, EFTUD2/SNRP116, RPB1 and UBR5 and with RPB1 in a phosphorylation-independent manner. Interacts with the core C/D box snoRNP particle components NOP58 and FBL and with RUVBL1/TIP49. Interacts with RPAP3 and DNAAF10. Interacts with histone H4 and with SWI/SNF complex member SMARCB1/SNF5. Interacts with the mTORC1 complex member RPTOR. Interacts with MSL1.

It localises to the nucleus. Involved in the assembly of C/D box small nucleolar ribonucleoprotein (snoRNP) particles. Recruits the SWI/SNF complex to the core promoter of rRNA genes and enhances pre-rRNA transcription. Mediates interaction of TELO2 with the R2TP complex which is necessary for the stability of MTOR and SMG1. Positively regulates the assembly and activity of the mTORC1 complex. The polypeptide is PIH1 domain-containing protein 1 (PIH1D1) (Bos taurus (Bovine)).